Consider the following 43-residue polypeptide: Protein PsbN (43 aa).

The helical transmembrane segment at 5 to 27 threads the bilayer; the sequence is TLIAIFISCSLVSFTGYALYTAF.

This sequence belongs to the PsbN family.

The protein localises to the plastid. It localises to the chloroplast thylakoid membrane. Functionally, may play a role in photosystem I and II biogenesis. The sequence is that of Protein PsbN from Lopidium concinnum (Moss).